Reading from the N-terminus, the 132-residue chain is Small ribosomal subunit protein uS8 (132 aa).

It belongs to the universal ribosomal protein uS8 family. Part of the 30S ribosomal subunit. Contacts proteins S5 and S12.

One of the primary rRNA binding proteins, it binds directly to 16S rRNA central domain where it helps coordinate assembly of the platform of the 30S subunit. The protein is Small ribosomal subunit protein uS8 of Brucella melitensis biotype 1 (strain ATCC 23456 / CCUG 17765 / NCTC 10094 / 16M).